The primary structure comprises 216 residues: Pathogenicity-related ORF2 (216 aa).

A run of 4 helical transmembrane segments spans residues V6–V26, L55–F75, I157–M177, and F193–L213.

The protein belongs to the FliP/MopC/SpaP family.

It localises to the cell membrane. In terms of biological role, important for pathogenicity. In Xanthomonas campestris pv. glycines, this protein is Pathogenicity-related ORF2.